The primary structure comprises 193 residues: Transcriptional activator GvpE2 (193 aa).

143-148 (KRKVYR) lines the DNA pocket. The tract at residues 153–184 (QAAIEHVDSVVLQLLTFAVGLQTIMADCIVNQ) is leucine-zipper.

In terms of assembly, homodimer. Interacts with endogenous GvpD, also with GvpD from H.mediterranei.

The protein resides in the cytoplasm. Its activity is regulated as follows. Degraded once GvpD is translated; degradation requires 'Arg-494' of GvpD; tested in transgenic H.volcanii. Fusion of green fluorescent protein to its C-terminus partially protects it from degradation. Functionally, plays a regulatory role in gas vesicle synthesis, required to activate transcription of the c-gvpA operon. Gas vesicles are hollow, gas filled proteinaceous nanostructures found in several microbial planktonic microorganisms. They allow positioning of halobacteria at the optimal depth for growth in the poorly aerated, shallow brine pools of their habitat. Expression of 2 c-vac DNA fragments containing 2 divergently transcribed regions (gvpE-gvpF-gvpG-gvpH-gvpI-gvpJ-gvpK-gvpL-gvpM and gvpA-gvpC-gvpN-gvpO) allows H.volcanii to produce gas vesicles. All site-directed mutagenesis is tested in H.volcanii. This chain is Transcriptional activator GvpE2, found in Halobacterium salinarum (strain ATCC 700922 / JCM 11081 / NRC-1) (Halobacterium halobium).